The sequence spans 512 residues: DEAD-box ATP-dependent RNA helicase 5 (512 aa).

2 disordered regions span residues 1-33 (MGRS…KLEA) and 45-76 (ATST…GGGK). Residues 14-45 (SRKSKKEKKSKKDKKRKLEAEAEVVVVEAAAA) adopt a coiled-coil conformation. Over residues 16–30 (KSKKEKKSKKDKKRK) the composition is skewed to basic residues. The Q motif signature appears at 94–120 (SSFAATALPPQVLDCCKGFERPSPIQA). The 178-residue stretch at 123–300 (WPYLLDGRDF…QEFMDPNPIK (178 aa)) folds into the Helicase ATP-binding domain. 136–143 (AATGSGKT) is a binding site for ATP. Residues 248 to 251 (DEAD) carry the DEAD box motif. The region spanning 333-476 (LLDKYHKAQR…VVPPALTKFG (144 aa)) is the Helicase C-terminal domain.

The protein belongs to the DEAD box helicase family. DDX5/DBP2 subfamily.

Its subcellular location is the nucleus. The protein resides in the nucleolus. It carries out the reaction ATP + H2O = ADP + phosphate + H(+). In terms of biological role, ATP-dependent RNA helicase required for 60S ribosomal subunit synthesis. Involved in efficient pre-rRNA processing, predominantly at site A3, which is necessary for the normal formation of 25S and 5.8S rRNAs. This is DEAD-box ATP-dependent RNA helicase 5 from Oryza sativa subsp. japonica (Rice).